The following is a 233-amino-acid chain: Small ribosomal subunit protein uS2 (233 aa).

The protein belongs to the universal ribosomal protein uS2 family.

This chain is Small ribosomal subunit protein uS2, found in Clostridium botulinum (strain Alaska E43 / Type E3).